We begin with the raw amino-acid sequence, 655 residues long: p-hydroxybenzoic acid efflux pump subunit AaeB (655 aa).

Transmembrane regions (helical) follow at residues Phe-13–Leu-33, Trp-38–Pro-58, Leu-69–Ile-89, Leu-93–Val-113, Trp-121–Leu-141, Glu-152–Ile-172, Leu-370–Val-390, Phe-407–Pro-427, Gln-431–Val-451, Met-459–Phe-479, and Phe-482–Leu-502.

It belongs to the aromatic acid exporter ArAE (TC 2.A.85) family.

It is found in the cell inner membrane. Its function is as follows. Forms an efflux pump with AaeA. Could function as a metabolic relief valve, allowing to eliminate certain compounds when they accumulate to high levels in the cell. The polypeptide is p-hydroxybenzoic acid efflux pump subunit AaeB (Salmonella dublin (strain CT_02021853)).